A 51-amino-acid polypeptide reads, in one-letter code: MWKVNDQGFLNITVAGTKFNLIATSTKIGFYTDPPSHLIIIPLKIFPLPPK.

Asn11 carries N-linked (GlcNAc...) asparagine; by host glycosylation.

The protein belongs to the asfivirus I177L family.

The protein resides in the virion. The sequence is that of Protein I177L from Ornithodoros (relapsing fever ticks).